The primary structure comprises 121 residues: Large ribosomal subunit protein bL20 (121 aa).

The protein belongs to the bacterial ribosomal protein bL20 family.

Its function is as follows. Binds directly to 23S ribosomal RNA and is necessary for the in vitro assembly process of the 50S ribosomal subunit. It is not involved in the protein synthesizing functions of that subunit. In Wolbachia pipientis subsp. Culex pipiens (strain wPip), this protein is Large ribosomal subunit protein bL20.